The sequence spans 440 residues: Beta-1,3-galactosyl-O-glycosyl-glycoprotein beta-1,6-N-acetylglucosaminyltransferase 3 (440 aa).

Topologically, residues 1 to 12 (MKMTGWKKKLCR) are cytoplasmic. Residues 13-30 (GHHLWALGCYMLLAVVAL) traverse the membrane as a helical; Signal-anchor for type II membrane protein segment. Over 31 to 440 (RLSLRLKCDV…RHKAIYGTEL (410 aa)) the chain is Lumenal. Disulfide bonds link C73/C230, C164/C384, C185/C212, and C393/C425. N108 carries an N-linked (GlcNAc...) asparagine glycan.

It belongs to the glycosyltransferase 14 family. In terms of processing, N-glycosylated.

Its subcellular location is the golgi apparatus membrane. The enzyme catalyses a 3-O-[beta-D-galactosyl-(1-&gt;3)-N-acetyl-alpha-D-galactosaminyl]-L-seryl-[protein] + UDP-N-acetyl-alpha-D-glucosamine = 3-O-{beta-D-galactosyl-(1-&gt;3)-[N-acetyl-beta-D-glucosaminyl-(1-&gt;6)]-N-acetyl-alpha-D-galactosaminyl}-L-seryl-[protein] + UDP + H(+). It carries out the reaction a 3-O-[beta-D-galactosyl-(1-&gt;3)-N-acetyl-alpha-D-galactosaminyl]-L-threonyl-[protein] + UDP-N-acetyl-alpha-D-glucosamine = a 3-O-{beta-D-galactosyl-(1-&gt;3)-[N-acetyl-beta-D-glucosaminyl-(1-&gt;6)]-N-acetyl-alpha-D-galactosaminyl}-L-threonyl-[protein] + UDP + H(+). It catalyses the reaction a beta-D-Gal-(1-&gt;4)-beta-D-GlcNAc-(1-&gt;3)-beta-D-Gal-(1-&gt;4)-beta-D-GlcNAc derivative + UDP-N-acetyl-alpha-D-glucosamine = a beta-D-Gal-(1-&gt;4)-beta-D-GlcNAc-(1-&gt;3)-[beta-D-GlcNAc-(1-&gt;6)]-beta-D-Gal-(1-&gt;4)-N-acetyl-beta-D-glucosaminyl derivative + UDP + H(+). The catalysed reaction is 3-O-[N-acetyl-beta-D-glucosaminyl-(1-&gt;3)-N-acetyl-alpha-D-galactosaminyl]-L-seryl-[protein] + UDP-N-acetyl-alpha-D-glucosamine = 3-O-[N-acetyl-beta-D-glucosaminyl-(1-&gt;3)-[N-acetyl-beta-D-glucosaminyl-(1-&gt;6)]-N-acetyl-alpha-D-galactosaminyl]-L-seryl-[protein] + UDP + H(+). The enzyme catalyses a 3-O-[N-acetyl-beta-D-glucosaminyl-(1-&gt;3)-N-acetyl-alpha-D-galactosaminyl]-L-threonyl-[protein] + UDP-N-acetyl-alpha-D-glucosamine = 3-O-[N-acetyl-beta-D-glucosaminyl-(1-&gt;3)-[N-acetyl-beta-D-glucosaminyl-(1-&gt;6)]-N-acetyl-alpha-D-galactosaminyl]-L-threonyl-[protein] + UDP + H(+). It functions in the pathway protein modification; protein glycosylation. Functionally, glycosyltransferase that can synthesize all known mucin beta 6 N-acetylglucosaminides. Mediates core 2 and core 4 O-glycan branching, 2 important steps in mucin-type biosynthesis. Also has I-branching enzyme activity by converting linear into branched poly-N-acetyllactosaminoglycans, leading to introduce the blood group I antigen during embryonic development. This Ovis aries (Sheep) protein is Beta-1,3-galactosyl-O-glycosyl-glycoprotein beta-1,6-N-acetylglucosaminyltransferase 3 (GCNT3).